The chain runs to 239 residues: 2,3,4,5-tetrahydropyridine-2,6-dicarboxylate N-acetyltransferase (239 aa).

The protein belongs to the transferase hexapeptide repeat family. DapH subfamily.

It catalyses the reaction (S)-2,3,4,5-tetrahydrodipicolinate + acetyl-CoA + H2O = L-2-acetamido-6-oxoheptanedioate + CoA. It functions in the pathway amino-acid biosynthesis; L-lysine biosynthesis via DAP pathway; LL-2,6-diaminopimelate from (S)-tetrahydrodipicolinate (acetylase route): step 1/3. Catalyzes the transfer of an acetyl group from acetyl-CoA to tetrahydrodipicolinate. This chain is 2,3,4,5-tetrahydropyridine-2,6-dicarboxylate N-acetyltransferase, found in Staphylococcus carnosus (strain TM300).